Here is a 334-residue protein sequence, read N- to C-terminus: Fructose-1,6-bisphosphatase class 1 (334 aa).

Mg(2+)-binding residues include E90, D113, L115, and D116. Substrate-binding positions include 116-119 (DGSS), N209, Y242, and K272. Mg(2+) is bound at residue E278.

The protein belongs to the FBPase class 1 family. In terms of assembly, homotetramer. It depends on Mg(2+) as a cofactor.

It localises to the cytoplasm. The catalysed reaction is beta-D-fructose 1,6-bisphosphate + H2O = beta-D-fructose 6-phosphate + phosphate. The protein operates within carbohydrate biosynthesis; gluconeogenesis. This Haemophilus ducreyi (strain 35000HP / ATCC 700724) protein is Fructose-1,6-bisphosphatase class 1.